The following is a 554-amino-acid chain: uncharacterized protein (554 aa).

Residues Asp-327 and Asn-328 each coordinate Ca(2+).

The protein belongs to the sulfatase family. It depends on Ca(2+) as a cofactor.

It localises to the cytoplasm. The protein resides in the nucleus. This is an uncharacterized protein from Schizosaccharomyces pombe (strain 972 / ATCC 24843) (Fission yeast).